The chain runs to 682 residues: Methionine synthase reductase (682 aa).

A Flavodoxin-like domain is found at phenylalanine 4–phenylalanine 147. Leucine 93–phenylalanine 124 is an FMN binding site. Residues threonine 271–proline 516 enclose the FAD-binding FR-type domain. Lysine 293 contributes to the NADP(+) binding site. Residues arginine 455–serine 458 and glycine 488–threonine 491 each bind FAD. NADP(+) is bound by residues arginine 607–glutamine 609 and aspartate 643. Tryptophan 681 lines the FAD pocket.

FAD serves as cofactor. Requires FMN as cofactor.

The catalysed reaction is 2 methylcob(III)alamin-[methionine synthase] + 2 S-adenosyl-L-homocysteine + NADP(+) + H(+) = 2 cob(II)alamin-[methionine synthase] + 2 S-adenosyl-L-methionine + NADPH. Involved in the reductive regeneration of cob(I)alamin cofactor required for the maintenance of methionine synthase in a functional state. The chain is Methionine synthase reductase from Caenorhabditis elegans.